The sequence spans 427 residues: Tryptophan synthase beta chain 1 (427 aa).

Lys-107 bears the N6-(pyridoxal phosphate)lysine mark.

It belongs to the TrpB family. As to quaternary structure, tetramer of two alpha and two beta chains. Pyridoxal 5'-phosphate is required as a cofactor.

It carries out the reaction (1S,2R)-1-C-(indol-3-yl)glycerol 3-phosphate + L-serine = D-glyceraldehyde 3-phosphate + L-tryptophan + H2O. The protein operates within amino-acid biosynthesis; L-tryptophan biosynthesis; L-tryptophan from chorismate: step 5/5. Its function is as follows. The beta subunit is responsible for the synthesis of L-tryptophan from indole and L-serine. The polypeptide is Tryptophan synthase beta chain 1 (trpB1) (Aeropyrum pernix (strain ATCC 700893 / DSM 11879 / JCM 9820 / NBRC 100138 / K1)).